We begin with the raw amino-acid sequence, 542 residues long: uncharacterized protein (542 aa).

Helical transmembrane passes span 4–23 (FVEN…LLLG), 28–47 (FGFR…FSTI), 51–70 (ITVP…YTIG), 91–113 (LALG…LGLA), and 160–182 (YSLT…GGLF). RCK C-terminal domains follow at residues 190–272 (AKNA…LLGE) and 274–355 (VDGH…IFGD). Helical transmembrane passes span 363-385 (FNLV…EFPL), 390-412 (ALSL…MGRT), 425-447 (LALR…GAGF), 457-479 (LLII…VIGH), and 519-541 (YTSV…LFLL).

This sequence belongs to the AAE transporter (TC 2.A.81) family.

It localises to the cell membrane. This is an uncharacterized protein from Corynebacterium efficiens (strain DSM 44549 / YS-314 / AJ 12310 / JCM 11189 / NBRC 100395).